We begin with the raw amino-acid sequence, 735 residues long: NAD(P)H-quinone oxidoreductase subunit 5, chloroplastic (735 aa).

16 helical membrane passes run 9–29 (WIIPFVPLPIPILIGMGLLLF), 40–60 (WAFPNILLLSIVMIFSLDLSI), 89–109 (IDSLTSIMSILITTVGIFVLI), 125–145 (FAYMSLFNTSMLGLVTSCNLI), 147–167 (IYIFWELVGMCSYLLIGFWFT), 184–204 (IGDFGLLLGILGFYWITGSFE), 219–239 (NEVHFLFVTLCASLLFAGAVA), 258–278 (TPISALIHAATMVAAGIFLVA), 280–300 (LLPLFIVIPYIMNLISLIGII), 327–347 (LGYMMLALGMGSYRAALFHLI), 354–374 (ALLFLASGSIIHSMEAIVGYS), 396–416 (IAFLVGTLSLCGIPPLACFWS), 425–445 (WLYSPIFAIIAWSTAGLTAFY), 540–560 (LFPMLILLLFTLFVGAIAIPF), 600–620 (FSVSIACFGIFTAFLLYKPFY), and 714–734 (FYLLLYLVYVFIFLVISYFIL).

The protein belongs to the complex I subunit 5 family. In terms of assembly, NDH is composed of at least 16 different subunits, 5 of which are encoded in the nucleus.

It is found in the plastid. The protein localises to the chloroplast thylakoid membrane. It catalyses the reaction a plastoquinone + NADH + (n+1) H(+)(in) = a plastoquinol + NAD(+) + n H(+)(out). The enzyme catalyses a plastoquinone + NADPH + (n+1) H(+)(in) = a plastoquinol + NADP(+) + n H(+)(out). Functionally, NDH shuttles electrons from NAD(P)H:plastoquinone, via FMN and iron-sulfur (Fe-S) centers, to quinones in the photosynthetic chain and possibly in a chloroplast respiratory chain. The immediate electron acceptor for the enzyme in this species is believed to be plastoquinone. Couples the redox reaction to proton translocation, and thus conserves the redox energy in a proton gradient. In Gossypium hirsutum (Upland cotton), this protein is NAD(P)H-quinone oxidoreductase subunit 5, chloroplastic (ndhF).